Here is a 683-residue protein sequence, read N- to C-terminus: Dipeptidyl-peptidase 5 (683 aa).

Residues M1–A19 form the signal peptide. N53, N69, N103, N116, N126, and N400 each carry an N-linked (GlcNAc...) asparagine glycan. Active-site charge relay system residues include S535, D617, and H649.

This sequence belongs to the peptidase S9C family.

The protein localises to the secreted. It localises to the cytoplasm. It is found in the nucleus. This is Dipeptidyl-peptidase 5 from Schizosaccharomyces pombe (strain 972 / ATCC 24843) (Fission yeast).